Here is a 152-residue protein sequence, read N- to C-terminus: Psoriasis susceptibility 1 candidate gene 1 protein homolog (152 aa).

The span at methionine 1 to proline 31 shows a compositional bias: polar residues. 2 disordered regions span residues methionine 1 to proline 39 and alanine 132 to isoleucine 152.

In Pan troglodytes (Chimpanzee), this protein is Psoriasis susceptibility 1 candidate gene 1 protein homolog (PSORS1C1).